The primary structure comprises 600 residues: Potassium-transporting ATPase potassium-binding subunit (600 aa).

A run of 11 helical transmembrane segments spans residues 6 to 26 (IILL…LGTY), 65 to 85 (GYAI…YAVQ), 136 to 156 (ALSG…YALI), 179 to 199 (LYVL…QGVI), 283 to 303 (FSNL…CFTF), 314 to 334 (WAIL…VMGA), 367 to 387 (FGIS…CGAV), 419 to 439 (GLYG…LMIG), 458 to 478 (SLVI…AVVL), 523 to 543 (VMLA…VLAI), and 566 to 586 (LFIA…YVPA).

This sequence belongs to the KdpA family. As to quaternary structure, the system is composed of three essential subunits: KdpA, KdpB and KdpC.

It is found in the cell inner membrane. Its function is as follows. Part of the high-affinity ATP-driven potassium transport (or Kdp) system, which catalyzes the hydrolysis of ATP coupled with the electrogenic transport of potassium into the cytoplasm. This subunit binds the periplasmic potassium ions and delivers the ions to the membrane domain of KdpB through an intramembrane tunnel. This is Potassium-transporting ATPase potassium-binding subunit from Janthinobacterium sp. (strain Marseille) (Minibacterium massiliensis).